Reading from the N-terminus, the 112-residue chain is Protein ORF1 (112 aa).

Over residues 1 to 10 (MEGTDWSGWG) the composition is skewed to low complexity. The tract at residues 1–20 (MEGTDWSGWGDDSDFPWPKG) is disordered. The helical transmembrane segment at 51–71 (IAFVILIVSLFVLLLGVLLAC) threads the bilayer.

The protein localises to the host membrane. This chain is Protein ORF1, found in Snake adenovirus serotype 1 (SnAdV-1).